The following is a 74-amino-acid chain: Antimicrobial peptide ToAp1 (74 aa).

An N-terminal signal peptide occupies residues 1–22 (MQMKYLIPIFFLVLIVADHCHA). Residue lysine 39 is modified to Lysine amide. Residues 40–74 (GRRKRDITAQIEQYRNIQKREAAELEELLANLPVY) constitute a propeptide that is removed on maturation.

It belongs to the non-disulfide-bridged peptide (NDBP) superfamily. Short antimicrobial peptide (group 4) family. As to expression, expressed by the venom gland.

It localises to the secreted. Functionally, antimicrobial peptide. Is able to kill Mycobacterium abscessus subsp. massiliense in a dose-dependent manner. Has antifungal activity against Candida spp. and one Cryptococcus neoformans strains with MICs values ranging from 12.5 to 200 uM. Also shows an inhibitory activity on C.albicans biofilms at high concentrations. Shows low cytotoxic activity and has weak hemolytic activity on human erythrocytes. Shows anti-inflammatory activities, since it decreases release of pro-inflammatory cytokines, and increases release of anti-inflammatory cytokines. Acts by blocking the Toll-like receptor 4 (TLR4). In addition, decreases the expression of costimulatory molecules such as CD80 and CD86 in LPS-stimulated cells. In vivo, does not induce immune cell migration. Helical wheel projections predict an amphipathic peptide with distinct hydrophobic and hydrophilic faces. The sequence is that of Antimicrobial peptide ToAp1 from Tityus obscurus (Amazonian scorpion).